Reading from the N-terminus, the 101-residue chain is Small ribosomal subunit protein uS14 (101 aa).

The segment covering 1-11 has biased composition (basic and acidic residues); the sequence is MAKKSAIETNE. The disordered stretch occupies residues 1-20; that stretch reads MAKKSAIETNERRRKLATGH.

This sequence belongs to the universal ribosomal protein uS14 family. Part of the 30S ribosomal subunit. Contacts proteins S3 and S10.

Functionally, binds 16S rRNA, required for the assembly of 30S particles and may also be responsible for determining the conformation of the 16S rRNA at the A site. The sequence is that of Small ribosomal subunit protein uS14 from Xanthobacter autotrophicus (strain ATCC BAA-1158 / Py2).